A 380-amino-acid chain; its full sequence is Ribosomal RNA large subunit methyltransferase F (380 aa).

Residues 1 to 32 (MSHKTKPSTQERKAGKPSAPKRKVISKSPNSK) are disordered.

This sequence belongs to the methyltransferase superfamily. METTL16/RlmF family.

Its subcellular location is the cytoplasm. It catalyses the reaction adenosine(1618) in 23S rRNA + S-adenosyl-L-methionine = N(6)-methyladenosine(1618) in 23S rRNA + S-adenosyl-L-homocysteine + H(+). Its function is as follows. Specifically methylates the adenine in position 1618 of 23S rRNA. The protein is Ribosomal RNA large subunit methyltransferase F of Shewanella halifaxensis (strain HAW-EB4).